We begin with the raw amino-acid sequence, 1249 residues long: Protein transport protein Sec31A (1249 aa).

7 WD repeats span residues 4–47, 64–111, 120–160, 166–206, 209–254, 258–298, and 301–342; these read KEID…EIFE, SSSH…AGDK, KHTG…TPMT, QPPE…PIIK, DHSN…SPLR, NHAR…VLYE, and TNTQ…DGLR. The segment at 161–470 is interaction with SEC13; that stretch reads PGAKTQPPED…IDASQTDFEK (310 aa). Residues 397-429 form a WD 8; interaction with SEC13 repeat; it reads SFSFGGKLVTFENVTGQPQQGAEQPRRQPVFIS. Position 423 is an asymmetric dimethylarginine (Arg-423). A phosphoserine mark is found at Ser-526 and Ser-531. Lys-647 is covalently cross-linked (Glycyl lysine isopeptide (Lys-Gly) (interchain with G-Cter in ubiquitin)). Disordered stretches follow at residues 790–829, 842–940, and 954–1123; these read QGRSVPGQESSRSSYEGQPLPKGGPGPLAGHPQVSRVQSQ, TTWS…RYPN, and PHMY…PIGN. Residues 796-805 are compositionally biased toward polar residues; it reads GQESSRSSYE. Position 799 is a phosphoserine (Ser-799). The interval 800 to 1142 is interaction with PDCD6; the sequence is SRSSYEGQPL…TEKITKKPIP (343 aa). The ALG-2-binding site motif-2 (ABS-2) motif lies at 873–879; the sequence is GFIMHGN. The segment covering 898–908 has biased composition (pro residues); the sequence is QPPPYPQPQPY. Composition is skewed to low complexity over residues 961–970 and 991–1007; these read PASSPTSSSA and PSSSAYALPPGTTGTPP. The segment covering 1013–1024 has biased composition (polar residues); the sequence is PASQRTGPQNGW. Low complexity predominate over residues 1056-1074; it reads PGGDPQPQGLQQQPSASGP. Thr-1190 carries the phosphothreonine modification. Ser-1192 is subject to Phosphoserine. A Glycyl lysine isopeptide (Lys-Gly) (interchain with G-Cter in ubiquitin) cross-link involves residue Lys-1246.

The protein belongs to the WD repeat SEC31 family. COPII is composed of at least 5 proteins: the SEC23/24 complex, the SEC13/31 complex and SAR1. SEC13 and SEC31 make a 2:2 tetramer that forms the edge element of the COPII outer coat. The tetramer self-assembles in multiple copies to form the complete polyhedral cage. Interacts (via WD 8) with SEC13. Interacts with PDCD6; interaction takes place in response to cytosolic calcium increase and leads to bridge together the BCR(KLHL12) complex and SEC31A, leading to monoubiquitination. Interacts with KLHL12. Post-translationally, monoubiquitinated by the BCR(KLHL12) E3 ubiquitin ligase complex, leading to regulate the size of COPII coats. In terms of tissue distribution, ubiquitously expressed.

The protein localises to the cytoplasm. It is found in the cytoplasmic vesicle. Its subcellular location is the COPII-coated vesicle membrane. The protein resides in the endoplasmic reticulum membrane. Component of the coat protein complex II (COPII) which promotes the formation of transport vesicles from the endoplasmic reticulum (ER). The coat has two main functions, the physical deformation of the endoplasmic reticulum membrane into vesicles and the selection of cargo molecules. In Rattus norvegicus (Rat), this protein is Protein transport protein Sec31A (Sec31a).